Reading from the N-terminus, the 307-residue chain is MNLKVKIGELTLKNPVMPASGTFGFGLEFKDIFDLKNLGALVVKTITKNPRLGNRPPRVYEVSCGMINSIGLANPGWDYFCEKILPQIKDLNDILILNIAGESVEEFQYLAREAQRFDEIKALELNVSCPNVSKGGIAFGTDLEALKQIVSSVRKIYSKTLIVKLTPNVTDITVYAKAAENAGADALTLINTFTGMVIDVKSKKPILGNKHGGVSGPAIRPMAVKMVYDCFKAVSIPIIGVGGIDSKEAALEFFLAGATAIQVGSQNFVEPGFMPRLIRELGEYLQEENIESIAKLTGLAHRGEENV.

Residues S20 and 44 to 45 contribute to the FMN site; that span reads KT. Residues K44 and 68 to 72 each bind substrate; that span reads NSIGL. Residues N98 and N126 each coordinate FMN. N126 is a binding site for substrate. C129 (nucleophile) is an active-site residue. K164 and I190 together coordinate FMN. 191 to 192 is a substrate binding site; the sequence is NT. FMN is bound by residues G216, 242-243, and 264-265; these read GG and GS.

Belongs to the dihydroorotate dehydrogenase family. Type 1 subfamily. As to quaternary structure, heterotetramer of 2 PyrK and 2 PyrD type B subunits. Requires FMN as cofactor.

It localises to the cytoplasm. The enzyme catalyses (S)-dihydroorotate + NAD(+) = orotate + NADH + H(+). It functions in the pathway pyrimidine metabolism; UMP biosynthesis via de novo pathway; orotate from (S)-dihydroorotate (NAD(+) route): step 1/1. Functionally, catalyzes the conversion of dihydroorotate to orotate with NAD(+) as electron acceptor. The protein is Dihydroorotate dehydrogenase B (NAD(+)), catalytic subunit (pyrD) of Carboxydothermus hydrogenoformans (strain ATCC BAA-161 / DSM 6008 / Z-2901).